A 440-amino-acid chain; its full sequence is Protein disulfide-isomerase A6 homolog (440 aa).

Positions 1-18 are cleaved as a signal peptide; the sequence is MALIKLLLASLAITSVCG. Thioredoxin domains are found at residues 19-131 and 127-273; these read MYSK…AEAK and LAEA…ARAQ. Residues Cys-54 and Cys-57 each act as nucleophile in the active site. Cys-54 and Cys-57 are joined by a disulfide. The segment at 138–164 is disordered; it reads LGGKSSGSSSSGSGSGSGKRGGGGSGN. Residues 139-149 show a composition bias toward low complexity; it reads GGKSSGSSSSG. The segment covering 150-163 has biased composition (gly residues); sequence SGSGSGKRGGGGSG. Catalysis depends on nucleophile residues Cys-194 and Cys-197. Cys-194 and Cys-197 are joined by a disulfide. Residues 404–426 are disordered; sequence DGFPKIQKTEKWDGKDGALPAED. Basic and acidic residues predominate over residues 410-419; sequence QKTEKWDGKD. The short motif at 437 to 440 is the Prevents secretion from ER element; sequence KTEL.

It belongs to the protein disulfide isomerase family.

Its subcellular location is the endoplasmic reticulum lumen. The enzyme catalyses Catalyzes the rearrangement of -S-S- bonds in proteins.. In terms of biological role, may function as a chaperone that inhibits aggregation of misfolded proteins. May negatively regulate the unfolded protein response (UPR) through binding to UPR sensors. The sequence is that of Protein disulfide-isomerase A6 homolog from Caenorhabditis elegans.